A 529-amino-acid chain; its full sequence is VIN3-like protein 3 (529 aa).

The Nuclear localization signal signature appears at 97–104; the sequence is PKRQKRDL. A PHD-type zinc finger spans residues 137-207; that stretch reads RCSCCICFKY…CFNCVSCGKT (71 aa). The short motif at 214–221 is the Nuclear localization signal element; it reads LKKQLIIA. The region spanning 312–411 is the Fibronectin type-III domain; sequence GSMKIRIESV…FIVSTKTLQD (100 aa). The interval 421-529 is VIN3-Interacting Domain (VID); that stretch reads MSNCNNANKM…AGVSLILLQD (109 aa).

As to quaternary structure, interacts with VIN3.

It is found in the nucleus. In terms of biological role, involved in both the vernalization and photoperiod pathways by regulating gene expression. This Arabidopsis thaliana (Mouse-ear cress) protein is VIN3-like protein 3 (VIL3).